The chain runs to 366 residues: tRNA/tmRNA (uracil-C(5))-methyltransferase (366 aa).

S-adenosyl-L-methionine contacts are provided by Q190, Y218, N223, E239, and D299. Residue C324 is the Nucleophile of the active site. Residue E358 is the Proton acceptor of the active site.

The protein belongs to the class I-like SAM-binding methyltransferase superfamily. RNA M5U methyltransferase family. TrmA subfamily.

It catalyses the reaction uridine(54) in tRNA + S-adenosyl-L-methionine = 5-methyluridine(54) in tRNA + S-adenosyl-L-homocysteine + H(+). It carries out the reaction uridine(341) in tmRNA + S-adenosyl-L-methionine = 5-methyluridine(341) in tmRNA + S-adenosyl-L-homocysteine + H(+). Functionally, dual-specificity methyltransferase that catalyzes the formation of 5-methyluridine at position 54 (m5U54) in all tRNAs, and that of position 341 (m5U341) in tmRNA (transfer-mRNA). This chain is tRNA/tmRNA (uracil-C(5))-methyltransferase, found in Salmonella heidelberg (strain SL476).